We begin with the raw amino-acid sequence, 522 residues long: BTB/POZ domain-containing protein 3 (522 aa).

The BTB domain occupies 120–190; sequence ADVHFVVGPP…IYCDEIDLAA (71 aa). In terms of domain architecture, BACK spans 235–300; that stretch reads FEEPDLTQRC…NWAEVECQRQ (66 aa).

In terms of tissue distribution, strongly expressed in the primary visual cortex.

It is found in the cytoplasm. The protein resides in the cytosol. It localises to the nucleus. Functionally, acts as a key regulator of dendritic field orientation during development of sensory cortex. Also directs dendrites toward active axon terminals when ectopically expressed. This is BTB/POZ domain-containing protein 3 (BTBD3) from Callithrix jacchus (White-tufted-ear marmoset).